A 165-amino-acid polypeptide reads, in one-letter code: Bark lectin isoform 2 (165 aa).

N-linked (GlcNAc...) asparagine glycosylation is found at Asn-27 and Asn-57. Disulfide bonds link Cys-33–Cys-80 and Cys-126–Cys-133.

The protein belongs to the protease inhibitor I3 (leguminous Kunitz-type inhibitor) family. Dimer.

In terms of biological role, glucose and N-acetylglucosamine binding lectin. Has hemagglutinating activity against human and rabbit erythrocytes which does not require divalent cations. Inhibits factor Xa and, to a lesser extent, trypsin. Does not inhibit neutrophil elastase, human plasma kallikrein, papain, human plasmin, porcine pancreatic kallikrein and bovin chymotrypsin. Has insecticidal activity against the termite species N.corniger. Induces apoptosis in prostrate cancer cell lines DU145 and PC3. This chain is Bark lectin isoform 2, found in Crateva tapia (Garlic-pear tree).